Consider the following 217-residue polypeptide: 3,4-dihydroxy-2-butanone 4-phosphate synthase (217 aa).

D-ribulose 5-phosphate-binding positions include 37 to 38 (RE), aspartate 42, 150 to 154 (RRGHT), and glutamate 174. Glutamate 38 lines the Mg(2+) pocket. Histidine 153 serves as a coordination point for Mg(2+).

It belongs to the DHBP synthase family. As to quaternary structure, homodimer. The cofactor is Mg(2+). Requires Mn(2+) as cofactor.

It carries out the reaction D-ribulose 5-phosphate = (2S)-2-hydroxy-3-oxobutyl phosphate + formate + H(+). It functions in the pathway cofactor biosynthesis; riboflavin biosynthesis; 2-hydroxy-3-oxobutyl phosphate from D-ribulose 5-phosphate: step 1/1. Catalyzes the conversion of D-ribulose 5-phosphate to formate and 3,4-dihydroxy-2-butanone 4-phosphate. This is 3,4-dihydroxy-2-butanone 4-phosphate synthase from Pseudoalteromonas translucida (strain TAC 125).